We begin with the raw amino-acid sequence, 85 residues long: Putative membrane protein insertion efficiency factor (85 aa).

It belongs to the UPF0161 family.

It is found in the cell inner membrane. Could be involved in insertion of integral membrane proteins into the membrane. In Escherichia fergusonii (strain ATCC 35469 / DSM 13698 / CCUG 18766 / IAM 14443 / JCM 21226 / LMG 7866 / NBRC 102419 / NCTC 12128 / CDC 0568-73), this protein is Putative membrane protein insertion efficiency factor.